Consider the following 329-residue polypeptide: Transcription factor TGA2.3 (329 aa).

A disordered region spans residues 1-48 (MADMSPRTDTSTDDTDDNHMLEPGQLALAAASDSDRSKDKHEDQKTLR). A compositionally biased stretch (basic and acidic residues) spans 33-46 (DSDRSKDKHEDQKT). The bZIP domain maps to 43–87 (DQKTLRRLAQNREAARKSRLRKKAYVQQLENSRLKLTQLEQELQR). Residues 45 to 65 (KTLRRLAQNREAARKSRLRKK) form a basic motif region. Positions 71–85 (LENSRLKLTQLEQEL) are leucine-zipper. Positions 110-326 (ALAFDMEYAR…RALSSLWLAR (217 aa)) constitute a DOG1 domain.

This sequence belongs to the bZIP family. As to quaternary structure, interacts with NPR1/NH1 and NPR3/NH3.

Its subcellular location is the nucleus. Its function is as follows. Transcriptional regulator involved in defense response. The polypeptide is Transcription factor TGA2.3 (Oryza sativa subsp. japonica (Rice)).